We begin with the raw amino-acid sequence, 69 residues long: A-kinase anchor protein inhibitor 1 (69 aa).

The tract at residues 39 to 69 (QESLRREGRPGDSRAWGQLGGCELTKKHEKK) is disordered. The segment covering 41–50 (SLRREGRPGD) has biased composition (basic and acidic residues).

As to quaternary structure, binds cAMP-dependent protein kinase (PKA). Interacts specifically with RII-regulatory subunits of PKA (PRKAR2A and PRKAR2B). In terms of tissue distribution, preferentially expressed in the neural tissues.

Functionally, protein kinase A (PKA)-binding protein. Binds to type II regulatory subunits of protein kinase A (PKA) and may block the A-kinase anchoring protein (AKAP)-mediated subcellular localization of PKA. The protein is A-kinase anchor protein inhibitor 1 of Mus musculus (Mouse).